The chain runs to 245 residues: Putative transport permease YvfS (245 aa).

The next 6 membrane-spanning stretches (helical) occupy residues 20 to 40, 53 to 73, 103 to 123, 137 to 157, 164 to 184, and 214 to 234; these read YFVL…TNVV, HYLM…TLGI, IGQS…GAII, GLWI…IGLM, AGIS…WMPF, and GSPT…FMLL. An ABC transmembrane type-2 domain is found at 20–242; it reads YFVLWSLIMP…LLSKYIRRKQ (223 aa).

This sequence belongs to the ABC-2 integral membrane protein family.

It localises to the cell membrane. This Bacillus subtilis (strain 168) protein is Putative transport permease YvfS (yvfS).